A 211-amino-acid polypeptide reads, in one-letter code: Bcl-2-related ovarian killer protein homolog B (211 aa).

Positions 32 to 44 (KELCRDFIHSRIT) match the BH4 motif. Positions 67–83 (VSVVLLKLGDELECMRP) match the BH3 motif. Residues 113 to 132 (EVIAMGITWGKVVAIYAVAA) carry the BH1 motif. The short motif at 165–179 (WLKKRGGWVDILKCV) is the BH2 element. Residues 190–210 (WLSTAVLTWREFIKTMYVYLT) traverse the membrane as a helical segment.

The protein belongs to the Bcl-2 family. In terms of tissue distribution, expressed strongly in ovary and more weakly in eye. Little expression in other tissues examined.

Its subcellular location is the membrane. Its function is as follows. May play a role in apoptosis. Does not appear to show pro-apoptotic activity when expressed ectopically in early embryos. This chain is Bcl-2-related ovarian killer protein homolog B (bokb), found in Danio rerio (Zebrafish).